The following is a 292-amino-acid chain: Ribosomal RNA small subunit methyltransferase A (292 aa).

Residues N29, L31, G56, E77, D102, and N127 each contribute to the S-adenosyl-L-methionine site.

This sequence belongs to the class I-like SAM-binding methyltransferase superfamily. rRNA adenine N(6)-methyltransferase family. RsmA subfamily.

Its subcellular location is the cytoplasm. The catalysed reaction is adenosine(1518)/adenosine(1519) in 16S rRNA + 4 S-adenosyl-L-methionine = N(6)-dimethyladenosine(1518)/N(6)-dimethyladenosine(1519) in 16S rRNA + 4 S-adenosyl-L-homocysteine + 4 H(+). Its function is as follows. Specifically dimethylates two adjacent adenosines (A1518 and A1519) in the loop of a conserved hairpin near the 3'-end of 16S rRNA in the 30S particle. May play a critical role in biogenesis of 30S subunits. The protein is Ribosomal RNA small subunit methyltransferase A of Bacillus licheniformis (strain ATCC 14580 / DSM 13 / JCM 2505 / CCUG 7422 / NBRC 12200 / NCIMB 9375 / NCTC 10341 / NRRL NRS-1264 / Gibson 46).